The following is a 588-amino-acid chain: Glutamate--tRNA ligase (588 aa).

Residues 112–122 (PNPDFYLHLGS) carry the 'HIGH' region motif.

It belongs to the class-I aminoacyl-tRNA synthetase family. Glutamate--tRNA ligase type 2 subfamily.

It localises to the cytoplasm. The enzyme catalyses tRNA(Glu) + L-glutamate + ATP = L-glutamyl-tRNA(Glu) + AMP + diphosphate. Functionally, catalyzes the attachment of glutamate to tRNA(Glu) in a two-step reaction: glutamate is first activated by ATP to form Glu-AMP and then transferred to the acceptor end of tRNA(Glu). This chain is Glutamate--tRNA ligase, found in Caldivirga maquilingensis (strain ATCC 700844 / DSM 13496 / JCM 10307 / IC-167).